We begin with the raw amino-acid sequence, 369 residues long: Beta-1,3-galactosyltransferase 9 (369 aa).

Residues 1–12 (MQVTFCRLRTHQ) are Cytoplasmic-facing. The helical; Signal-anchor for type II membrane protein transmembrane segment at 13–33 (WCFILFNVILFHALLFGTDFV) threads the bilayer. Topologically, residues 34–369 (EEYFLHSLPY…IKNNLMYFAD (336 aa)) are lumenal. N-linked (GlcNAc...) asparagine glycosylation is found at Asn66, Asn96, and Asn109.

Belongs to the glycosyltransferase 31 family.

It localises to the golgi apparatus membrane. Putative glycosyltransferase that could catalyze the transfer of galactose residues from UDP-alpha-D-galactose. In Homo sapiens (Human), this protein is Beta-1,3-galactosyltransferase 9.